The primary structure comprises 132 residues: Phosphoribosyl-AMP cyclohydrolase (132 aa).

Asp-81 provides a ligand contact to Mg(2+). Cys-82 contacts Zn(2+). Mg(2+) is bound by residues Asp-83 and Asp-85. Positions 99 and 106 each coordinate Zn(2+).

It belongs to the PRA-CH family. In terms of assembly, homodimer. It depends on Mg(2+) as a cofactor. The cofactor is Zn(2+).

It localises to the cytoplasm. It carries out the reaction 1-(5-phospho-beta-D-ribosyl)-5'-AMP + H2O = 1-(5-phospho-beta-D-ribosyl)-5-[(5-phospho-beta-D-ribosylamino)methylideneamino]imidazole-4-carboxamide. The protein operates within amino-acid biosynthesis; L-histidine biosynthesis; L-histidine from 5-phospho-alpha-D-ribose 1-diphosphate: step 3/9. Functionally, catalyzes the hydrolysis of the adenine ring of phosphoribosyl-AMP. This is Phosphoribosyl-AMP cyclohydrolase from Chromobacterium violaceum (strain ATCC 12472 / DSM 30191 / JCM 1249 / CCUG 213 / NBRC 12614 / NCIMB 9131 / NCTC 9757 / MK).